We begin with the raw amino-acid sequence, 123 residues long: UPF0102 protein PSHAa2523 (123 aa).

Belongs to the UPF0102 family.

The protein is UPF0102 protein PSHAa2523 of Pseudoalteromonas translucida (strain TAC 125).